A 908-amino-acid chain; its full sequence is SH3 and PX domain-containing protein 2B (908 aa).

Residues 5 to 129 (RSIVEVKVLD…QFFETRPEDL (125 aa)) enclose the PX domain. Tyr25 bears the Phosphotyrosine mark. SH3 domains follow at residues 152 to 211 (MVLE…GQDG) and 221 to 280 (EEEE…KNSG). Phosphoserine is present on residues Ser279 and Ser291. Disordered stretches follow at residues 280–300 (GEPL…ALDL) and 315–366 (ELLN…PPIP). A compositionally biased stretch (basic and acidic residues) spans 315–337 (ELLNNQRDGRFEGRLVPDGDVKQ). Positions 338 to 347 (RSPKMRQRPP) are enriched in basic residues. An SH3 3 domain is found at 368-427 (QVEEEYYTIAEFQTTIPDGISFQAGLKVEVIEKSLSGWWYIQMEDKEGWAPATFIDKYKK). The interval 455–832 (TENNTGPEAV…LGPRVTGKVG (378 aa)) is disordered. Basic and acidic residues-rich tracts occupy residues 486 to 499 (KDWK…RKAS), 516 to 546 (QEEK…KMEP), 569 to 584 (LARD…DKSK), 595 to 606 (CGHKVLAKEVKK), and 615 to 625 (SKAELSEEKVD). Phosphoserine occurs at positions 499 and 528. Position 661 is a phosphotyrosine (Tyr661). A compositionally biased stretch (basic and acidic residues) spans 671–684 (KSQEKALLDGESHH). Pro residues predominate over residues 754–764 (VVPPRRPPPPK). Position 840 is a phosphoserine (Ser840). Residues 847–908 (PKDSLYVAVA…IPSNYLRKKP (62 aa)) form the SH3 4 domain.

The protein belongs to the SH3PXD2 family. Interacts with NOXO1. Interacts (via SH3 domains) with NOXA1; the interaction is direct. Interacts with ADAM15. Interacts with FASLG. In terms of processing, phosphorylated in SRC-transformed cells. As to expression, highly expressed in the stromal-vascular fraction of white adipose tissue with moderate expression in heart, skeletal muscle and the mature adipocyte fraction of white adipose tissue. Also expressed in brain, spleen, kidney and liver. Expressed in white and brown adipose tissues, eye, lung, heart, brain, spleen, stomach, liver and skeletal muscle (at protein level). Not expressed in kidney or bone marrow.

Its subcellular location is the cytoplasm. It localises to the cell projection. The protein resides in the podosome. Its function is as follows. Adapter protein involved in invadopodia and podosome formation and extracellular matrix degradation. Binds matrix metalloproteinases (ADAMs), NADPH oxidases (NOXs) and phosphoinositides. Acts as an organizer protein that allows NOX1- or NOX3-dependent reactive oxygen species (ROS) generation and ROS localization. Plays a role in mitotic clonal expansion during the immediate early stage of adipocyte differentiation. The protein is SH3 and PX domain-containing protein 2B (Sh3pxd2b) of Mus musculus (Mouse).